The chain runs to 233 residues: uncharacterized protein (233 aa).

Positions 1-10 (MSSKLSKKKL) are enriched in basic residues. The interval 1-90 (MSSKLSKKKL…KRQKGKNNDR (90 aa)) is disordered. Residues 11–56 (KSLEYRSKKFDKKSQSLEEHEKKVQQKNEELEKKAADKISRDELPE) are compositionally biased toward basic and acidic residues. The span at 76–85 (KTLKSKRQKG) shows a compositional bias: basic residues. The RRM domain occupies 92-171 (VILFVGNLPK…RKINIELTAG (80 aa)). 2 stretches are compositionally biased toward basic and acidic residues: residues 194–216 (MRQRVASEEQQAGEEKMARKAVA) and 224–233 (IHPDRLRLLQ). The segment at 194-233 (MRQRVASEEQQAGEEKMARKAVADEGLESGIHPDRLRLLQ) is disordered.

It is found in the nucleus. The protein resides in the nucleolus. This is an uncharacterized protein from Schizosaccharomyces pombe (strain 972 / ATCC 24843) (Fission yeast).